Reading from the N-terminus, the 442-residue chain is Gamma-glutamyl phosphate reductase (442 aa).

The protein belongs to the gamma-glutamyl phosphate reductase family.

The protein resides in the cytoplasm. It carries out the reaction L-glutamate 5-semialdehyde + phosphate + NADP(+) = L-glutamyl 5-phosphate + NADPH + H(+). The protein operates within amino-acid biosynthesis; L-proline biosynthesis; L-glutamate 5-semialdehyde from L-glutamate: step 2/2. In terms of biological role, catalyzes the NADPH-dependent reduction of L-glutamate 5-phosphate into L-glutamate 5-semialdehyde and phosphate. The product spontaneously undergoes cyclization to form 1-pyrroline-5-carboxylate. The protein is Gamma-glutamyl phosphate reductase of Campylobacter curvus (strain 525.92).